The sequence spans 666 residues: MNVCCVKIPACVRRFRTCQIGNVAVTDFSSTPLLDTIRTPADLRKLKVEQVRQVADELRLETIDAVSVTGGHFGAGLGVVELTTAIHYIFDTPRDRLIWDVGHQAYPHKILTGRRDRIRTLRTGGGLSGFTKRTESDYDPFGAAHSSTSISASLGMAVARDLSGGNNNVIAVIGDGAMSAGMAYEAMNNAGAMNSRLIVILNDNDMSIAPPVGAMSAYLSRLYSGKTYRSLREAAKQLGKHLPKMIADRAERVEEYSRGFMTNSGTLFEELGFYYVGPIDGHNLDHLLPVLKNVRDMENGPILVHVVTQKGKGYPPAEAAADKYHAVVKFDISTGAQSKSKPNAPSYQNVFGASLVKEAEKDDKIVAITAAMPSGTGVDIFNNAFPERTFDVGIAEQHAVTFAAGLATEGFKPFCAIYSTFLQRGYDQVVHDVAIQSLPVRFAIDRAGLVGADGATHAGSFDNAFLGCLPNMVIMAAADEAELVHMVATQVAINDRPSAVRYPRGEGRGVEMPEVGVPLPIGKGRIVRQGSKIALLSFGTRLAECEKAADELAAHGLSTTIADARFMKPLDVDLALKLAREHDVLITIEEGSIGGFGSHVMQTLMDNGALDGGLVRVRSMILPDEFLDHDTPTAMYARAGLDAKGIVAKVFEALGKDVNTETVKLA.

Thiamine diphosphate is bound by residues H103 and 144–146 (AHS). D175 is a Mg(2+) binding site. Thiamine diphosphate is bound by residues 176 to 177 (GA), N204, Y314, and E396. Position 204 (N204) interacts with Mg(2+).

It belongs to the transketolase family. DXPS subfamily. Homodimer. It depends on Mg(2+) as a cofactor. Thiamine diphosphate serves as cofactor.

The catalysed reaction is D-glyceraldehyde 3-phosphate + pyruvate + H(+) = 1-deoxy-D-xylulose 5-phosphate + CO2. Its pathway is metabolic intermediate biosynthesis; 1-deoxy-D-xylulose 5-phosphate biosynthesis; 1-deoxy-D-xylulose 5-phosphate from D-glyceraldehyde 3-phosphate and pyruvate: step 1/1. Catalyzes the acyloin condensation reaction between C atoms 2 and 3 of pyruvate and glyceraldehyde 3-phosphate to yield 1-deoxy-D-xylulose-5-phosphate (DXP). This is 1-deoxy-D-xylulose-5-phosphate synthase from Nitrobacter winogradskyi (strain ATCC 25391 / DSM 10237 / CIP 104748 / NCIMB 11846 / Nb-255).